Consider the following 392-residue polypeptide: DNA replication and repair protein RecF (392 aa).

30 to 37 provides a ligand contact to ATP; sequence GRNGFGKT.

The protein belongs to the RecF family.

The protein resides in the cytoplasm. The RecF protein is involved in DNA metabolism; it is required for DNA replication and normal SOS inducibility. RecF binds preferentially to single-stranded, linear DNA. It also seems to bind ATP. This is DNA replication and repair protein RecF from Corynebacterium aurimucosum (strain ATCC 700975 / DSM 44827 / CIP 107346 / CN-1) (Corynebacterium nigricans).